Consider the following 838-residue polypeptide: Major vault protein (838 aa).

MVP repeat units lie at residues 13–52 (VHIL…VVPP), 53–114 (RFYC…FKLK), 118–170 (VNTG…HIIS), 171–223 (PNTA…ITLT), 224–278 (DTEA…IVLN), 280–328 (KEYC…NVVS), 329–380 (KDQA…IALD), and 381–433 (KNEG…CMSE).

As to quaternary structure, the vault ribonucleoprotein particle is a huge (400 A x 670 A) cage structure of 12.9 MDa. It consists of a dimer of half-vaults, with each half-vault comprising 39 identical major vault protein (MVP) chains, PARP4 and one or more vault RNAs (vRNAs).

It localises to the cytoplasm. Its subcellular location is the nucleus. Functionally, required for normal vault structure. Vaults are multi-subunit structures that may act as scaffolds for proteins involved in signal transduction. Vaults may also play a role in nucleo-cytoplasmic transport. The chain is Major vault protein from Trypanosoma cruzi (strain CL Brener).